The following is a 369-amino-acid chain: Glutamate 5-kinase (369 aa).

K9 is a binding site for ATP. S49, D136, and N148 together coordinate substrate. ATP contacts are provided by residues 168 to 169 (TD) and 210 to 216 (TGGMLTK). Residues 275 to 355 (QGEIYVDQGA…KGVVIHRDDW (81 aa)) form the PUA domain.

Belongs to the glutamate 5-kinase family.

The protein resides in the cytoplasm. The catalysed reaction is L-glutamate + ATP = L-glutamyl 5-phosphate + ADP. It participates in amino-acid biosynthesis; L-proline biosynthesis; L-glutamate 5-semialdehyde from L-glutamate: step 1/2. Catalyzes the transfer of a phosphate group to glutamate to form L-glutamate 5-phosphate. This Streptococcus gordonii (strain Challis / ATCC 35105 / BCRC 15272 / CH1 / DL1 / V288) protein is Glutamate 5-kinase.